Consider the following 234-residue polypeptide: tRNA (guanine-N(1)-)-methyltransferase (234 aa).

S-adenosyl-L-methionine contacts are provided by residues G115 and 135 to 140; that span reads VGDYIL.

The protein belongs to the RNA methyltransferase TrmD family. As to quaternary structure, homodimer.

The protein localises to the cytoplasm. It carries out the reaction guanosine(37) in tRNA + S-adenosyl-L-methionine = N(1)-methylguanosine(37) in tRNA + S-adenosyl-L-homocysteine + H(+). Specifically methylates guanosine-37 in various tRNAs. This Rickettsia peacockii (strain Rustic) protein is tRNA (guanine-N(1)-)-methyltransferase.